We begin with the raw amino-acid sequence, 731 residues long: Catalase-peroxidase (731 aa).

A disordered region spans residues 1-24; it reads MSTEPNCPFSGNARKHTAAGAPSN. A cross-link (tryptophyl-tyrosyl-methioninium (Trp-Tyr) (with M-245)) is located at residues 96 to 219; the sequence is WHSAGTYRVS…LGAVQMGLIY (124 aa). His-97 acts as the Proton acceptor in catalysis. Residues 219–245 constitute a cross-link (tryptophyl-tyrosyl-methioninium (Tyr-Met) (with W-96)); it reads YVNPEGPNGNPDPIAAARDIRETFARM. His-260 contacts heme b. The interval 339-365 is disordered; that stretch reads GAQQWKPKGDAGAGTVPDAHDPSKRHA.

Belongs to the peroxidase family. Peroxidase/catalase subfamily. In terms of assembly, homodimer or homotetramer. Requires heme b as cofactor. Post-translationally, formation of the three residue Trp-Tyr-Met cross-link is important for the catalase, but not the peroxidase activity of the enzyme.

The catalysed reaction is H2O2 + AH2 = A + 2 H2O. It carries out the reaction 2 H2O2 = O2 + 2 H2O. Its function is as follows. Bifunctional enzyme with both catalase and broad-spectrum peroxidase activity. The polypeptide is Catalase-peroxidase (Polaromonas sp. (strain JS666 / ATCC BAA-500)).